Consider the following 203-residue polypeptide: Urease accessory protein UreG (203 aa).

Residue 12 to 19 (GPVGSGKT) coordinates GTP.

This sequence belongs to the SIMIBI class G3E GTPase family. UreG subfamily. As to quaternary structure, homodimer. UreD, UreF and UreG form a complex that acts as a GTP-hydrolysis-dependent molecular chaperone, activating the urease apoprotein by helping to assemble the nickel containing metallocenter of UreC. The UreE protein probably delivers the nickel.

The protein localises to the cytoplasm. Facilitates the functional incorporation of the urease nickel metallocenter. This process requires GTP hydrolysis, probably effectuated by UreG. The sequence is that of Urease accessory protein UreG from Alteromonas mediterranea (strain DSM 17117 / CIP 110805 / LMG 28347 / Deep ecotype).